We begin with the raw amino-acid sequence, 358 residues long: Pyruvate dehydrogenase E1 component subunit alpha (358 aa).

In terms of assembly, heterodimer of an alpha and a beta chain. The cofactor is thiamine diphosphate.

It carries out the reaction N(6)-[(R)-lipoyl]-L-lysyl-[protein] + pyruvate + H(+) = N(6)-[(R)-S(8)-acetyldihydrolipoyl]-L-lysyl-[protein] + CO2. Its function is as follows. The pyruvate dehydrogenase complex catalyzes the overall conversion of pyruvate to acetyl-CoA and CO(2). It contains multiple copies of three enzymatic components: pyruvate dehydrogenase (E1), dihydrolipoamide acetyltransferase (E2) and lipoamide dehydrogenase (E3). The polypeptide is Pyruvate dehydrogenase E1 component subunit alpha (pdhA) (Mycoplasma genitalium (strain ATCC 33530 / DSM 19775 / NCTC 10195 / G37) (Mycoplasmoides genitalium)).